The chain runs to 218 residues: Probable transaldolase (218 aa).

The Schiff-base intermediate with substrate role is filled by K87.

It belongs to the transaldolase family. Type 3B subfamily.

The protein resides in the cytoplasm. It carries out the reaction D-sedoheptulose 7-phosphate + D-glyceraldehyde 3-phosphate = D-erythrose 4-phosphate + beta-D-fructose 6-phosphate. It functions in the pathway carbohydrate degradation; pentose phosphate pathway; D-glyceraldehyde 3-phosphate and beta-D-fructose 6-phosphate from D-ribose 5-phosphate and D-xylulose 5-phosphate (non-oxidative stage): step 2/3. Transaldolase is important for the balance of metabolites in the pentose-phosphate pathway. The chain is Probable transaldolase from Parabacteroides distasonis (strain ATCC 8503 / DSM 20701 / CIP 104284 / JCM 5825 / NCTC 11152).